Here is a 251-residue protein sequence, read N- to C-terminus: MKTIISAKDVHLSYGDYEALHGINLNFKEKELTALIGPSGCGKSTFLRCLNRMNDDIENIKITGEIKFEGQDIYGSKMDLVALRKNVGMVFQQPTPFPFSVYDNVAYGLKIAGVKDKELIDQRVEESLKQAAIWKETKDNLNRNAQAFSGGQQQRICIARALAIRPKVVLLDEPTSALDPISSSEIEETLMDLKHQYTFIMVTHNLQQAGRVSDQTAFLMNGDLVEAGPTEEMFIAPKKQITSDYLNGRFG.

Residues 5 to 246 (ISAKDVHLSY…PKKQITSDYL (242 aa)) enclose the ABC transporter domain. Position 37 to 44 (37 to 44 (GPSGCGKS)) interacts with ATP.

It belongs to the ABC transporter superfamily. Phosphate importer (TC 3.A.1.7) family. The complex is composed of two ATP-binding proteins (PstB), two transmembrane proteins (PstC and PstA) and a solute-binding protein (PstS).

Its subcellular location is the cell membrane. It catalyses the reaction phosphate(out) + ATP + H2O = ADP + 2 phosphate(in) + H(+). Its function is as follows. Part of the ABC transporter complex PstSACB involved in phosphate import. Responsible for energy coupling to the transport system. The sequence is that of Phosphate import ATP-binding protein PstB 2 from Lactobacillus acidophilus (strain ATCC 700396 / NCK56 / N2 / NCFM).